Consider the following 524-residue polypeptide: Chitinase D (524 aa).

The first 30 residues, 1-30 (MNQAVRFRPVITFALAFILIITWFAPRADA), serve as a signal peptide directing secretion. The region spanning 95–180 (VPAGLTSSLV…TSLSVTTSTG (86 aa)) is the Fibronectin type-III domain. The 325-residue stretch at 190 to 514 (KWLIGYWHNF…NAHRPFLNGL (325 aa)) folds into the GH18 domain. The active-site Proton donor is Glu303.

It belongs to the glycosyl hydrolase 18 family. Chitinase class II subfamily.

The catalysed reaction is Random endo-hydrolysis of N-acetyl-beta-D-glucosaminide (1-&gt;4)-beta-linkages in chitin and chitodextrins.. This chain is Chitinase D (chiD), found in Niallia circulans (Bacillus circulans).